A 192-amino-acid chain; its full sequence is uncharacterized protein (192 aa).

The region spanning 29–160 (HRQAAVLIPI…PLDIYRRGDS (132 aa)) is the Nudix hydrolase domain. Positions 67–89 (GAVDDTDTSVIAAALREAEEEVA) match the Nudix box motif. Mg(2+)-binding residues include Glu-83 and Glu-87.

This sequence belongs to the Nudix hydrolase family. PCD1 subfamily. Mn(2+) is required as a cofactor. Mg(2+) serves as cofactor.

Probably mediates the hydrolysis of some nucleoside diphosphate derivatives. This is an uncharacterized protein from Escherichia coli O6:H1 (strain CFT073 / ATCC 700928 / UPEC).